The chain runs to 111 residues: Anti-adapter protein IraM (111 aa).

Belongs to the IraM/RssC family.

The protein resides in the cytoplasm. Functionally, involved in the stabilization of the sigma stress factor RpoS. This chain is Anti-adapter protein IraM, found in Cronobacter sakazakii (strain ATCC BAA-894) (Enterobacter sakazakii).